The following is a 182-amino-acid chain: MSGLLKYLFGCFILCLLLQGKTHMTSATISKPHETIDIEKQNMTGERNSTLAQQLSFPMEDPTNWNYAILALAFVVLFLAFLILAQNSRANRTRKMKALNGAGGRNETEADSTQKAMMQYVVEVDNLAETDQMLQSKPTYISLNQVAQTSSPKVLPKEGQILVEWKDGNIGFLYTDSKEDDV.

An N-terminal signal peptide occupies residues 1-20 (MSGLLKYLFGCFILCLLLQG). At 21–64 (KTHMTSATISKPHETIDIEKQNMTGERNSTLAQQLSFPMEDPTN) the chain is on the extracellular side. Residues asparagine 42 and asparagine 48 are each glycosylated (N-linked (GlcNAc...) asparagine). Residues 65–85 (WNYAILALAFVVLFLAFLILA) form a helical membrane-spanning segment. Topologically, residues 86–182 (QNSRANRTRK…LYTDSKEDDV (97 aa)) are cytoplasmic.

The protein belongs to the OST-beta family. In terms of assembly, interacts with slc51a. The Ost-alpha/Ost-beta complex is a heterodimer composed of alpha (slc51a) and beta (slc51b) subunit; may induce the transport of slc51a from the endoplasmic reticulum to the plasma membrane. In terms of tissue distribution, expressed in liver.

It localises to the cell membrane. In terms of biological role, essential component of the Ost-alpha/Ost-beta complex, a heterodimer that acts as the intestinal basolateral transporter responsible for bile acid export from enterocytes into portal blood. Efficiently transports the major species of bile acids. May modulate slc51a glycosylation, membrane trafficking and stability activities. Able to transport taurocholate, estrone sulfate, digoxin, and prostaglandin E(2), but not p-aminohippurate or S-dinitrophenyl glutathione. This chain is Organic solute transporter subunit beta (slc51b), found in Leucoraja erinaceus (Little skate).